The following is a 186-amino-acid chain: Akirin-1A (186 aa).

Residues 14–65 (EALMSPQSPKRRRCAPLPGSPATPSPQRCAIRPEMQQGQQQPLSQLGGDRRL) form a disordered region. Over residues 49–60 (QQGQQQPLSQLG) the composition is skewed to low complexity. Residues 183-186 (SYVS) carry the SYVS motif motif.

This sequence belongs to the akirin family.

The protein localises to the nucleus. Its function is as follows. Molecular adapter that acts as a bridge between proteins, and which is involved skeletal muscle development. Functions as a signal transducer for MSTN during skeletal muscle regeneration and myogenesis. The chain is Akirin-1A (akirin1-a) from Xenopus laevis (African clawed frog).